The chain runs to 214 residues: Probable GTP-binding protein EngB (214 aa).

Residues 25–203 form the EngB-type G domain; the sequence is EGAEVAFAGR…EQVITGWLNL (179 aa). Residues 33–40, 60–64, 80–83, 147–150, and 182–184 each bind GTP; these read GRSNAGKS, GRTQL, DLPG, TKSD, and FSS. Mg(2+) contacts are provided by Ser40 and Thr62.

It belongs to the TRAFAC class TrmE-Era-EngA-EngB-Septin-like GTPase superfamily. EngB GTPase family. It depends on Mg(2+) as a cofactor.

Its function is as follows. Necessary for normal cell division and for the maintenance of normal septation. This Teredinibacter turnerae (strain ATCC 39867 / T7901) protein is Probable GTP-binding protein EngB.